A 310-amino-acid chain; its full sequence is M1-specific T cell receptor beta chain (310 aa).

The signal sequence occupies residues Met-1–Gly-21. A t cell receptor beta variable 19 region spans residues Gly-22–Ile-114. The 98-residue stretch at Glu-34–Thr-131 folds into the Ig-like V-type domain. Asn-37 carries an N-linked (GlcNAc...) asparagine glycan. Cys-42 and Cys-110 are joined by a disulfide. The segment at Leu-46 to Ala-50 is CDR1. A peptide antigen is bound at residue Asp-49. A CDR2 region spans residues Ser-68–Asp-73. The interval Cys-110 to Phe-122 is CDR3. The t cell receptor beta joining 2-7 stretch occupies residues Ser-117–Thr-131. The interval Asp-133–Gly-310 is t cell receptor beta constant 2. The Ig-like C1-type domain maps to Pro-140–Thr-249. Cys-162 and Cys-227 are joined by a disulfide. Asn-201 carries N-linked (GlcNAc...) asparagine glycosylation. The tract at residues Cys-262–Ala-276 is connecting peptide. The helical transmembrane segment at Thr-277 to Leu-299 threads the bilayer. The Cytoplasmic portion of the chain corresponds to Met-300–Gly-310.

As to quaternary structure, disulfide-linked heterodimer with TRAV27*01J42*01C*01 alpha chain. The TR primarily interacts via its CDR3-beta domain with M/matrix protein 1-derived peptide (GILGFVFTL) displayed by HLA-A*02.01 in a 'peg-notch' recognition mode. The alpha-beta TR associates with the transmembrane signaling CD3 coreceptor proteins to form the TR-CD3 (TCR). The assembly of alpha-beta TR heterodimers with CD3 occurs in the endoplasmic reticulum where a single alpha-beta TR heterodimer associates with one CD3D-CD3E heterodimer, one CD3G-CD3E heterodimer and one CD247 homodimer forming a stable octameric structure. CD3D-CD3E and CD3G-CD3E heterodimers preferentially associate with TR alpha and TR beta chains (via TM domain), respectively. The association of the CD247 homodimer is the last step of TCR assembly in the endoplasmic reticulum and is required for transport to the cell surface. As to expression, expressed in M/matrix protein 1-specific effector memory CD8-positive T cells readily detectable in the peripheral blood, secondary lymphoid organs and lung (primary site of infection) of IAV infected individuals.

It is found in the cell membrane. Functionally, the beta chain of TRAV27*01J42*01C*01/TRBV19*01J2S7*01C*02 alpha-beta T cell receptor (TR) clonotype that is specific for HLA-A*02:01-restricted M/matrix protein 1 immunodominant epitope GILGFVFTL of influenza A virus (IAV). Classified as a public TCR clonotype, it is preferentially selected in effector memory CD8-positive T cells among multiple HLA-A*02:01 carriers/individuals and confers long-lived immunity against IAV infection. Can cross-recognize sporadically emerging IAV variants by molecular mimicry, inducing immunity toward different influenza strains. Antigen recognition initiates TR-CD3 clustering on the cell surface and intracellular activation of LCK that phosphorylates the ITAM motifs of CD3G, CD3D, CD3E and CD247 enabling the recruitment of ZAP70. In turn, ZAP70 phosphorylates LAT, which recruits numerous signaling molecules to form the LAT signalosome. The LAT signalosome propagates signal branching to three major signaling pathways, the calcium, the mitogen-activated protein kinase (MAPK) kinase and the nuclear factor NF-kappa-B (NF-kB) pathways, leading to the mobilization of transcription factors that are critical for gene expression and essential for T cell differentiation into effector/memory T cells. This Homo sapiens (Human) protein is M1-specific T cell receptor beta chain.